A 258-amino-acid chain; its full sequence is Hydroxyacylglutathione hydrolase (258 aa).

Zn(2+) contacts are provided by histidine 54, histidine 56, aspartate 58, histidine 59, histidine 113, aspartate 138, and histidine 176.

The protein belongs to the metallo-beta-lactamase superfamily. Glyoxalase II family. In terms of assembly, monomer. Zn(2+) serves as cofactor.

It carries out the reaction an S-(2-hydroxyacyl)glutathione + H2O = a 2-hydroxy carboxylate + glutathione + H(+). It functions in the pathway secondary metabolite metabolism; methylglyoxal degradation; (R)-lactate from methylglyoxal: step 2/2. In terms of biological role, thiolesterase that catalyzes the hydrolysis of S-D-lactoyl-glutathione to form glutathione and D-lactic acid. The sequence is that of Hydroxyacylglutathione hydrolase from Synechococcus sp. (strain ATCC 27144 / PCC 6301 / SAUG 1402/1) (Anacystis nidulans).